Here is a 334-residue protein sequence, read N- to C-terminus: Anthranilate phosphoribosyltransferase (334 aa).

Residues glycine 79, 82–83 (GD), serine 87, 89–92 (NIST), 107–115 (KAGNRSISS), and serine 119 each bind 5-phospho-alpha-D-ribose 1-diphosphate. Glycine 79 is a binding site for anthranilate. Serine 91 serves as a coordination point for Mg(2+). Asparagine 110 contacts anthranilate. An anthranilate-binding site is contributed by arginine 165. Residues aspartate 224 and glutamate 225 each contribute to the Mg(2+) site.

It belongs to the anthranilate phosphoribosyltransferase family. In terms of assembly, homodimer. Requires Mg(2+) as cofactor.

It catalyses the reaction N-(5-phospho-beta-D-ribosyl)anthranilate + diphosphate = 5-phospho-alpha-D-ribose 1-diphosphate + anthranilate. It participates in amino-acid biosynthesis; L-tryptophan biosynthesis; L-tryptophan from chorismate: step 2/5. Catalyzes the transfer of the phosphoribosyl group of 5-phosphorylribose-1-pyrophosphate (PRPP) to anthranilate to yield N-(5'-phosphoribosyl)-anthranilate (PRA). The polypeptide is Anthranilate phosphoribosyltransferase (Streptococcus thermophilus (strain CNRZ 1066)).